A 1217-amino-acid polypeptide reads, in one-letter code: MAAGRAQVPSSEQAWLEDAQVFIQKTLCPAVKEPNVQLTPLIIDCVKTVWLSQGRNQGSTLPLSYSFVSVQDLKTHQRLPCCSHLSWSSSAYQAWAQEAGPNGNPLPREQLLLLGTLTDLSADLEQECRNGSLYVRDNTGVLSCELIDLDLSWLGHLFLFPCWSYLPPARWNSSGEGHLELWDAPVPVFPLTVSPGPVTPIPVLYPESASRLLRLRNKLRGVQRNLAGNLVRLSALVKSKQKAYFILSLGRSHPAVTHVSVIVQVPAQLVWHRVLRPGTAYVLTELRVSKIRGQRQHVWMTSQSSRLLLLKPECVQELELELEGPLLEADPKPLPTPSNSEDKKDPEGLARYSRLLSYSGAVTGVLNEPAGLYELDGQLGLCLAYQQFRGLRRVMRPGVCLQLQDVHLLQSVGGGTRRPVLAPCLRGAVLLQSFSRQKPGTHSSRQAYGASLYEQLVWERQLGLPLYLWATKALEELAGKLCPHVLRHHQFLQHSSPGSPSLGLQLLVPTLDLLAPPGSPVRNAHNEILEEPHHCPLQKYTRLQTPSSFPTLAALKEEGQREAWASFDPEALLPLPEASHLPSCQLNRHLAWSWLCLLPSAFHPAQVLLGVLVASSHKGCLQLRDQSGSLPCLLLAKHSQPLSDPRLIGCLVRAERFQLIVERDVRSSFPSWKELSMPGFIQKQQARVYVQFFLADALILPVPRPSLHSATPSTPQTDPTGPEGPHLGQSRLFLLCHKEALMKRNFCVPPGASPEVPKPVLSFCVLGSWLGGTQRKEGTGWGLPEPQGNDDKDQKVHLIFFGSSVRWFEFLHPGQVYRLVAPGPPTPMLFEKDGSSCISRRPLELAGCASCLTVQDNWTLELESSQDIQDVLDANKALPESSLTDLLSDNFTDSLVSFSAEILSRTLCEPLVASLWMKLGNTGTMRRCVKLTVALETAECEFPPHLDVYIEDPHLPPSLGLLPGARVHFSQLEKRVSRSHNVYCCFRSSTYVQVLSFPPETTISIPLPHIYLAELRQGGQSPFQATTSCHIVSVFSLQLFWVCAYCTSICRQGKCTRLGPTCPTQTAVSQAIIRLLVEDGTAEAVVTCRNHHVAAALGLCPREWASLLEFVRVPGRVVLQFAGPGAQLESSARVDKPMTMFLWTLCTSPSVLRPIVLSFELERKPSKIVPLEPPRLQRFQCGELPFLTHVNPRLRLSCLSIRESEYSSSLGILASSC.

The segment at 327–346 is disordered; that stretch reads LEADPKPLPTPSNSEDKKDP.

Belongs to the CTC1 family. In terms of assembly, component of the CST complex, composed of TEN1/C17orf106, CTC1/C17orf68 and STN1; in the complex interacts directly with STN1. Interacts with ACD and POT1.

It is found in the nucleus. Its subcellular location is the chromosome. It localises to the telomere. Its function is as follows. Component of the CST complex proposed to act as a specialized replication factor promoting DNA replication under conditions of replication stress or natural replication barriers such as the telomere duplex. The CST complex binds single-stranded DNA with high affinity in a sequence-independent manner, while isolated subunits bind DNA with low affinity by themselves. Initially the CST complex has been proposed to protect telomeres from DNA degradation. However, the CST complex has been shown to be involved in several aspects of telomere replication. The CST complex inhibits telomerase and is involved in telomere length homeostasis; it is proposed to bind to newly telomerase-synthesized 3' overhangs and to terminate telomerase action implicating the association with the ACD:POT1 complex thus interfering with its telomerase stimulation activity. The CST complex is also proposed to be involved in fill-in synthesis of the telomeric C-strand probably implicating recruitment and activation of DNA polymerase alpha. The CST complex facilitates recovery from many forms of exogenous DNA damage; seems to be involved in the re-initiation of DNA replication at repaired forks and/or dormant origins. Involved in telomere maintenance. Involved in genome stability. May be in involved in telomeric C-strand fill-in during late S/G2 phase. The protein is CST complex subunit CTC1 (CTC1) of Pongo abelii (Sumatran orangutan).